The sequence spans 490 residues: Polyamine transporter RMV1 (490 aa).

Residues 1 to 21 (MTELSSPNLDSASQKPRISTE) are compositionally biased toward polar residues. Residues 1 to 38 (MTELSSPNLDSASQKPRISTENPPPPPPHISIGVTTGD) are disordered. Transmembrane regions (helical) follow at residues 53–73 (ITVL…PFGI), 83–103 (LLAI…EALI), 116–136 (GYVV…QGWV), 160–180 (IPIL…TVAL), 188–208 (LSIV…PFVV), 231–248 (GVNW…LNYW), 273–293 (LLLV…AIAL), 303–323 (FADI…QAAA), 363–383 (TPWV…WLSF), 386–406 (IVAA…ITFV), 425–445 (VLGS…IMAF), and 448–468 (LKVA…QPCL).

Belongs to the amino acid-polyamine-organocation (APC) superfamily. Polyamine:cation symporter (PHS) (TC 2.A.3.12) family.

It localises to the cell membrane. In terms of biological role, cell membrane polyamine/proton symporter involved in the polyamine uptake in cells. Possesses high affinity for spermine and spermidine and lower affinity for putrescine. Transports paraquat, a polyamine analog, and thus confers sensitivity to this chemical which is used as a herbicide. This Arabidopsis thaliana (Mouse-ear cress) protein is Polyamine transporter RMV1 (RMV1).